The following is a 183-amino-acid chain: Putative 3-methyladenine DNA glycosylase (183 aa).

This sequence belongs to the DNA glycosylase MPG family.

The sequence is that of Putative 3-methyladenine DNA glycosylase from Legionella pneumophila subsp. pneumophila (strain Philadelphia 1 / ATCC 33152 / DSM 7513).